The primary structure comprises 1215 residues: DNA-directed RNA polymerase subunit beta' (1215 aa).

Zn(2+)-binding residues include Cys-60, Cys-62, Cys-75, and Cys-78. 3 residues coordinate Mg(2+): Asp-450, Asp-452, and Asp-454. Zn(2+) contacts are provided by Cys-818, Cys-892, Cys-899, and Cys-902.

The protein belongs to the RNA polymerase beta' chain family. In terms of assembly, the RNAP catalytic core consists of 2 alpha, 1 beta, 1 beta' and 1 omega subunit. When a sigma factor is associated with the core the holoenzyme is formed, which can initiate transcription. Mg(2+) is required as a cofactor. It depends on Zn(2+) as a cofactor.

It catalyses the reaction RNA(n) + a ribonucleoside 5'-triphosphate = RNA(n+1) + diphosphate. Its function is as follows. DNA-dependent RNA polymerase catalyzes the transcription of DNA into RNA using the four ribonucleoside triphosphates as substrates. The chain is DNA-directed RNA polymerase subunit beta' from Streptococcus suis (strain 98HAH33).